Here is a 666-residue protein sequence, read N- to C-terminus: Probable potassium transport system protein Kup (666 aa).

The next 12 helical transmembrane spans lie at 16–36 (GFII…LYTM), 58–78 (ISLI…LIAL), 100–120 (PWLI…GALT), 141–161 (IYQN…VLFG), 165–185 (FGTG…FSFL), 221–241 (IFIL…YSDL), 253–273 (WPFV…WILA), 292–312 (LTVY…QALI), 343–363 (LYIP…VLYF), 373–393 (YGLA…YYLI), 399–419 (PFLA…FFWA), and 424–444 (FMHG…VMFI).

It belongs to the HAK/KUP transporter (TC 2.A.72) family.

It localises to the cell membrane. It catalyses the reaction K(+)(in) + H(+)(in) = K(+)(out) + H(+)(out). Transport of potassium into the cell. Likely operates as a K(+):H(+) symporter. This is Probable potassium transport system protein Kup from Streptococcus pyogenes serotype M5 (strain Manfredo).